We begin with the raw amino-acid sequence, 448 residues long: Chaperone SurA (448 aa).

The signal sequence occupies residues 1-27 (MKKTLRFAAVASGLVASLITVAPSASA). PpiC domains follow at residues 185 to 288 (QQDL…RLVE) and 301 to 399 (IVQT…QVLG).

The protein resides in the periplasm. It catalyses the reaction [protein]-peptidylproline (omega=180) = [protein]-peptidylproline (omega=0). In terms of biological role, chaperone involved in the correct folding and assembly of outer membrane proteins. Recognizes specific patterns of aromatic residues and the orientation of their side chains, which are found more frequently in integral outer membrane proteins. May act in both early periplasmic and late outer membrane-associated steps of protein maturation. In Burkholderia pseudomallei (strain 1710b), this protein is Chaperone SurA.